Reading from the N-terminus, the 272-residue chain is Insertion element IS600 uncharacterized 31 kDa protein (272 aa).

Positions 105–268 constitute an Integrase catalytic domain; that stretch reads APTAPNQVWV…SPAAFREKYH (164 aa).

This Shigella sonnei protein is Insertion element IS600 uncharacterized 31 kDa protein.